The sequence spans 282 residues: Pantothenate synthetase (282 aa).

30–37 contacts ATP; the sequence is MGFLHDGH. H37 functions as the Proton donor in the catalytic mechanism. Q60 provides a ligand contact to (R)-pantoate. Residue Q60 coordinates beta-alanine. Position 146 to 149 (146 to 149) interacts with ATP; it reads GQKD. Q152 lines the (R)-pantoate pocket. Residues I175 and 183–186 each bind ATP; that span reads KSSR.

Belongs to the pantothenate synthetase family. In terms of assembly, homodimer.

The protein localises to the cytoplasm. It carries out the reaction (R)-pantoate + beta-alanine + ATP = (R)-pantothenate + AMP + diphosphate + H(+). Its pathway is cofactor biosynthesis; (R)-pantothenate biosynthesis; (R)-pantothenate from (R)-pantoate and beta-alanine: step 1/1. Functionally, catalyzes the condensation of pantoate with beta-alanine in an ATP-dependent reaction via a pantoyl-adenylate intermediate. This Campylobacter jejuni subsp. jejuni serotype O:23/36 (strain 81-176) protein is Pantothenate synthetase.